A 374-amino-acid polypeptide reads, in one-letter code: Anhydro-N-acetylmuramic acid kinase (374 aa).

15-22 (GTSADGID) contributes to the ATP binding site.

It belongs to the anhydro-N-acetylmuramic acid kinase family.

The enzyme catalyses 1,6-anhydro-N-acetyl-beta-muramate + ATP + H2O = N-acetyl-D-muramate 6-phosphate + ADP + H(+). The protein operates within amino-sugar metabolism; 1,6-anhydro-N-acetylmuramate degradation. It participates in cell wall biogenesis; peptidoglycan recycling. Functionally, catalyzes the specific phosphorylation of 1,6-anhydro-N-acetylmuramic acid (anhMurNAc) with the simultaneous cleavage of the 1,6-anhydro ring, generating MurNAc-6-P. Is required for the utilization of anhMurNAc either imported from the medium or derived from its own cell wall murein, and thus plays a role in cell wall recycling. The sequence is that of Anhydro-N-acetylmuramic acid kinase from Xanthomonas axonopodis pv. citri (strain 306).